Consider the following 126-residue polypeptide: L-alanine exporter AlaE (126 aa).

Residues 23-43 (FALVVYCFFTGMAIEILLSGM) traverse the membrane as a helical segment.

Belongs to the AlaE exporter family.

The protein resides in the cell inner membrane. Its function is as follows. Exports L-alanine. In Sodalis glossinidius (strain morsitans), this protein is L-alanine exporter AlaE.